An 811-amino-acid polypeptide reads, in one-letter code: Glycerol-3-phosphate acyltransferase (811 aa).

The short motif at 309-314 is the HXXXXD motif element; the sequence is CHRSHM.

The protein belongs to the GPAT/DAPAT family.

The protein localises to the cell inner membrane. The enzyme catalyses sn-glycerol 3-phosphate + an acyl-CoA = a 1-acyl-sn-glycero-3-phosphate + CoA. It functions in the pathway phospholipid metabolism; CDP-diacylglycerol biosynthesis; CDP-diacylglycerol from sn-glycerol 3-phosphate: step 1/3. The chain is Glycerol-3-phosphate acyltransferase from Colwellia psychrerythraea (strain 34H / ATCC BAA-681) (Vibrio psychroerythus).